The chain runs to 620 residues: UDP-glucose:protein N-beta-glucosyltransferase (620 aa).

The protein belongs to the glycosyltransferase 41 family.

Its subcellular location is the cytoplasm. The catalysed reaction is L-asparaginyl-[protein] + UDP-alpha-D-glucose = N(4)-(beta-D-glucosyl)-L-asparaginyl-[protein] + UDP + H(+). It functions in the pathway protein modification; protein glycosylation. In terms of biological role, inverting glycosyltransferase that catalyzes the transfer of one glucose moiety from UDP-glucose to an asparagine residue in peptides and proteins containing the NX(S/T) motif, resulting in their modification with a beta-linked 1,N-glucose. Likely acts as a key component of a general protein glycosylation system. This is UDP-glucose:protein N-beta-glucosyltransferase from Actinobacillus pleuropneumoniae serotype 5b (strain L20).